The following is a 419-amino-acid chain: Copalyl diphosphate synthase 2, chloroplastic (419 aa).

Lys82 provides a ligand contact to substrate.

This sequence belongs to the terpene synthase family. Tpsc subfamily. Requires Mg(2+) as cofactor. As to expression, ubiquitous expression in roots, stems, leaves and flowers.

It localises to the plastid. The protein resides in the chloroplast. It catalyses the reaction (2E,6E,10E)-geranylgeranyl diphosphate = (+)-copalyl diphosphate. Its pathway is secondary metabolite biosynthesis; terpenoid biosynthesis. Involved in the biosynthesis of ent-kaurene diterpenoids natural products such as oridonin, miltiradiene, eriocalyxin B and nezukol, known to exhibit antitumor, anti-inflammatory and antibacterial activities. Catalyzes the conversion of (2E,6E,10E)-geranylgeranyl diphosphate (GGPP) to (+)-copalyl diphosphate ((+)-CPP). The chain is Copalyl diphosphate synthase 2, chloroplastic from Isodon rubescens (Rabdosia rubescens).